A 44-amino-acid polypeptide reads, in one-letter code: Small ribosomal subunit protein eS7 (44 aa).

Positions 18-34 (KPTRKSRIKNKQKRPRS) are enriched in basic residues. Residues 18–44 (KPTRKSRIKNKQKRPRSRTLTAVHDAI) are disordered.

This sequence belongs to the eukaryotic ribosomal protein eS7 family. As to quaternary structure, component of the small ribosomal subunit.

It is found in the cytoplasm. The protein localises to the cytoskeleton. It localises to the microtubule organizing center. The protein resides in the centrosome. Its subcellular location is the nucleus. In terms of biological role, component of the small ribosomal subunit. The ribosome is a large ribonucleoprotein complex responsible for the synthesis of proteins in the cell. Required for rRNA maturation. The polypeptide is Small ribosomal subunit protein eS7 (rps7) (Salmo salar (Atlantic salmon)).